A 561-amino-acid chain; its full sequence is Serine palmitoyltransferase 2 (561 aa).

A helical transmembrane segment spans residues 57 to 77 (PYYISLLTYLNYLILIILGHV). At lysine 366 the chain carries N6-(pyridoxal phosphate)lysine. A helical transmembrane segment spans residues 443 to 463 (LGFIVYGVADSPVIPLLLYCP).

It belongs to the class-II pyridoxal-phosphate-dependent aminotransferase family. In terms of assembly, LCB1 and LCB2 encode essential subunits of the enzyme and form a heterodimer. Component of the SPOTS complex, at least composed of LCB1/2 (LCB1 and/or LCB2), ORM1/2 (ORM1 and/or ORM2), SAC1 and TSC3. Interacts with LCB1 and TSC3. Requires pyridoxal 5'-phosphate as cofactor.

Its subcellular location is the cytoplasm. It localises to the endoplasmic reticulum. The protein localises to the membrane. The enzyme catalyses L-serine + hexadecanoyl-CoA + H(+) = 3-oxosphinganine + CO2 + CoA. The protein operates within lipid metabolism; sphingolipid metabolism. Catalytic subunit of serine palmitoyltransferase (SPT), which catalyzes the committed step in the synthesis of sphingolipids, the condensation of serine with palmitoyl CoA to form the long chain base 3-ketosphinganine. The polypeptide is Serine palmitoyltransferase 2 (LCB2) (Saccharomyces cerevisiae (strain ATCC 204508 / S288c) (Baker's yeast)).